The sequence spans 364 residues: MAQQTPLYEQHTLCGARMVDFHGWMMPLHYGSQIDEHHAVRTDAGMFDVSHMTIVDLRGSRTREFLRYLLANDVAKLTKSGKALYSGMLNASGGVIDDLIVYYFTEDFFRLVVNSATREKDLSWITQHAEPFGIEITVRDDLSMIAVQGPNAQAKAATLFNDAQRQAVEGMKPFFGVQVGDLFIATTGYTGEAGYEIALPNEKAADFWRALVEAGVKPCGLGARDTLRLEAGMNLYGQEMDETISPLAANMGWTIAWEPTDRDFIGREALEVQREHGTEKLVGLVMTEKGVLRNELPVRFTDAQGNQHEGIITSGTFSPTLGYSIALARVPEGIGETAIVQIRNREMPVKVTKPVFVRNGKAVA.

The protein belongs to the GcvT family. The glycine cleavage system is composed of four proteins: P, T, L and H.

It carries out the reaction N(6)-[(R)-S(8)-aminomethyldihydrolipoyl]-L-lysyl-[protein] + (6S)-5,6,7,8-tetrahydrofolate = N(6)-[(R)-dihydrolipoyl]-L-lysyl-[protein] + (6R)-5,10-methylene-5,6,7,8-tetrahydrofolate + NH4(+). The glycine cleavage system catalyzes the degradation of glycine. This is Aminomethyltransferase from Shigella flexneri.